The chain runs to 281 residues: Proteasome subunit beta (281 aa).

A propeptide spans 1–53 (MEANTRSTGRLPAAFLTPGSSSFMDFLGEHQPEMLPGNRQLPPVQGVIEAPHG) (removed in mature form; by autocatalysis). The active-site Nucleophile is the T54.

This sequence belongs to the peptidase T1B family. In terms of assembly, the 20S proteasome core is composed of 14 alpha and 14 beta subunits that assemble into four stacked heptameric rings, resulting in a barrel-shaped structure. The two inner rings, each composed of seven catalytic beta subunits, are sandwiched by two outer rings, each composed of seven alpha subunits. The catalytic chamber with the active sites is on the inside of the barrel. Has probably a gated structure, the ends of the cylinder being occluded by the N-termini of the alpha-subunits. Is likely capped by the proteasome-associated ATPase, ARC.

The protein localises to the cytoplasm. The catalysed reaction is Cleavage of peptide bonds with very broad specificity.. It functions in the pathway protein degradation; proteasomal Pup-dependent pathway. With respect to regulation, the formation of the proteasomal ATPase ARC-20S proteasome complex, likely via the docking of the C-termini of ARC into the intersubunit pockets in the alpha-rings, may trigger opening of the gate for substrate entry. Interconversion between the open-gate and close-gate conformations leads to a dynamic regulation of the 20S proteasome proteolysis activity. Peptidolytic activity is completely inhibited by lactacystin, and to a lesser extent, by N-acetyl-Leu-Leu-norleucinal (Ac-LLnL) and benzoyloxycarbonyl-Leu-Leu-Leu-vinylsulfone (Z-LLL-VS) in vitro. Component of the proteasome core, a large protease complex with broad specificity involved in protein degradation. The S.coelicolor proteasome is able to cleave oligopeptides after hydrophobic residues, but not after basic or acidic residues, thus displaying chymotrypsin-like activity but not trypsin-like activity. The sequence is that of Proteasome subunit beta from Streptomyces coelicolor (strain ATCC BAA-471 / A3(2) / M145).